Consider the following 1151-residue polypeptide: MPCGFSPSPVAHHLVPGPPDTPAQQLRCGWTVGGWLLSLVRGLLPCLPPGARTAEGPIMVLAGPLAVSLLLPSLTLLVSHLSSSQDVSSEPSSEQQLCALSKHPTVAFEDLQPWVSNFTYPGARDFSQLALDPSGNQLIVGARNYLFRLSLANVSLLQATEWASSEDTRRSCQSKGKTEEECQNYVRVLIVAGRKVFMCGTNAFSPMCTSRQVGNLSRTIEKINGVARCPYDPRHNSTAVISSQGELYAATVIDFSGRDPAIYRSLGSGPPLRTAQYNSKWLNEPNFVAAYDIGLFAYFFLRENAVEHDCGRTVYSRVARVCKNDVGGRFLLEDTWTTFMKARLNCSRPGEVPFYYNELQSAFHLPEQDLIYGVFTTNVNSIAASAVCAFNLSAISQAFNGPFRYQENPRAAWLPIANPIPNFQCGTLPETGPNENLTERSLQDAQRLFLMSEAVQPVTPEPCVTQDSVRFSHLVVDLVQAKDTLYHVLYIGTESGTILKALSTASRSLHGCYLEELHVLPPGRREPLRSLRILHSARALFVGLRDGVLRVPLERCAAYRSQGACLGARDPYCGWDGKQQRCSTLEDSSNMSLWTQNITACPVRNVTRDGGFGPWSPWQPCEHLDGDNSGSCLCRARSCDSPRPRCGGLDCLGPAIHIANCSRNGAWTPWSSWALCSTSCGIGFQVRQRSCSNPAPRHGGRICVGKSREERFCNENTPCPVPIFWASWGSWSKCSSNCGGGMQSRRRACENGNSCLGCGVEFKTCNPEGCPEVRRNTPWTPWLPVNVTQGGARQEQRFRFTCRAPLADPHGLQFGRRRTETRTCPADGSGSCDTDALVEVLLRSGSTSPHTVSGGWAAWGPWSSCSRDCELGFRVRKRTCTNPEPRNGGLPCVGDAAEYQDCNPQACPVRGAWSCWTSWSPCSASCGGGHYQRTRSCTSPAPSPGEDICLGLHTEEALCATQACPEGWSPWSEWSKCTDDGAQSRSRHCEELLPGSSACAGNSSQSRPCPYSEIPVILPASSMEEATDCAGFNLIHLVATGISCFLGSGLLTLAVYLSCQHCQRQSQESTLVHPATPNHLHYKGGGTPKNEKYTPMEFKTLNKNNLIPDDRANFYPLQQTNVYTTTYYPSPLNKHSFRPEASPGQRCFPNS.

Residues 1-1036 (MPCGFSPSPV…TDCAGFNLIH (1036 aa)) lie on the Extracellular side of the membrane. One can recognise a Sema domain in the interval 103–553 (HPTVAFEDLQ…LRDGVLRVPL (451 aa)). N-linked (GlcNAc...) asparagine glycosylation is present at N153. Intrachain disulfides connect C172/C182 and C199/C208. N-linked (GlcNAc...) asparagine glycosylation is found at N236 and N345. Disulfide bonds link C322/C425 and C346/C388. N436 is a glycosylation site (N-linked (GlcNAc...) asparagine). The PSI domain occupies 555-602 (RCAAYRSQGACLGARDPYCGWDGKQQRCSTLEDSSNMSLWTQNITACP). TSP type-1 domains lie at 664 to 720 (NGAW…TPCP) and 722 to 771 (PIFW…EGCP). Cystine bridges form between C676-C713, C680-C719, C691-C703, C734-C765, C738-C770, and C749-C755. T788 is a glycosylation site (O-linked (GalNAc...) threonine). TSP type-1 domains follow at residues 853-908 (SGGW…QACP), 910-965 (RGAW…QACP), and 966-1010 (EGWS…RPCP). 6 disulfide bridges follow: C865/C902, C869/C907, C880/C892, C922/C959, C926/C964, and C937/C949. A helical; Signal-anchor for type III membrane protein membrane pass occupies residues 1037–1057 (LVATGISCFLGSGLLTLAVYL). The Cytoplasmic portion of the chain corresponds to 1058 to 1151 (SCQHCQRQSQ…SPGQRCFPNS (94 aa)).

This sequence belongs to the semaphorin family.

It is found in the membrane. Its function is as follows. May act as a positive axonal guidance cue. The polypeptide is Semaphorin-5B (SEMA5B) (Homo sapiens (Human)).